The chain runs to 147 residues: Deoxyuridine 5'-triphosphate nucleotidohydrolase (147 aa).

Substrate is bound by residues 68 to 70 (RSG), Asn81, and 85 to 87 (TID).

It belongs to the dUTPase family. Requires Mg(2+) as cofactor.

It catalyses the reaction dUTP + H2O = dUMP + diphosphate + H(+). Its pathway is pyrimidine metabolism; dUMP biosynthesis; dUMP from dCTP (dUTP route): step 2/2. This enzyme is involved in nucleotide metabolism: it produces dUMP, the immediate precursor of thymidine nucleotides and it decreases the intracellular concentration of dUTP so that uracil cannot be incorporated into DNA. The polypeptide is Deoxyuridine 5'-triphosphate nucleotidohydrolase (Solibacter usitatus (strain Ellin6076)).